The chain runs to 116 residues: Ribosome-binding factor A (116 aa).

This sequence belongs to the RbfA family. Monomer. Binds 30S ribosomal subunits, but not 50S ribosomal subunits or 70S ribosomes.

The protein resides in the cytoplasm. Functionally, one of several proteins that assist in the late maturation steps of the functional core of the 30S ribosomal subunit. Associates with free 30S ribosomal subunits (but not with 30S subunits that are part of 70S ribosomes or polysomes). Required for efficient processing of 16S rRNA. May interact with the 5'-terminal helix region of 16S rRNA. This is Ribosome-binding factor A from Streptococcus sanguinis (strain SK36).